The sequence spans 561 residues: Oxygen-dependent choline dehydrogenase (561 aa).

7–36 (DYIIVGAGSAGNVLASRLTEDADVTVLLLE) contributes to the FAD binding site. His-474 serves as the catalytic Proton acceptor.

Belongs to the GMC oxidoreductase family. Requires FAD as cofactor.

It carries out the reaction choline + A = betaine aldehyde + AH2. It catalyses the reaction betaine aldehyde + NAD(+) + H2O = glycine betaine + NADH + 2 H(+). It participates in amine and polyamine biosynthesis; betaine biosynthesis via choline pathway; betaine aldehyde from choline (cytochrome c reductase route): step 1/1. Functionally, involved in the biosynthesis of the osmoprotectant glycine betaine. Catalyzes the oxidation of choline to betaine aldehyde and betaine aldehyde to glycine betaine at the same rate. The chain is Oxygen-dependent choline dehydrogenase from Paraburkholderia phytofirmans (strain DSM 17436 / LMG 22146 / PsJN) (Burkholderia phytofirmans).